The chain runs to 274 residues: 3-methyl-2-oxobutanoate hydroxymethyltransferase (274 aa).

Residues D49 and D88 each contribute to the Mg(2+) site. Residues 49–50 (DS), D88, and K118 contribute to the 3-methyl-2-oxobutanoate site. E120 is a Mg(2+) binding site. The active-site Proton acceptor is E187.

It belongs to the PanB family. Homodecamer; pentamer of dimers. Mg(2+) is required as a cofactor.

The protein localises to the cytoplasm. The catalysed reaction is 3-methyl-2-oxobutanoate + (6R)-5,10-methylene-5,6,7,8-tetrahydrofolate + H2O = 2-dehydropantoate + (6S)-5,6,7,8-tetrahydrofolate. It functions in the pathway cofactor biosynthesis; (R)-pantothenate biosynthesis; (R)-pantoate from 3-methyl-2-oxobutanoate: step 1/2. Functionally, catalyzes the reversible reaction in which hydroxymethyl group from 5,10-methylenetetrahydrofolate is transferred onto alpha-ketoisovalerate to form ketopantoate. In Rhodopseudomonas palustris (strain BisB18), this protein is 3-methyl-2-oxobutanoate hydroxymethyltransferase.